The sequence spans 202 residues: Protein GrpE 1 (202 aa).

This sequence belongs to the GrpE family. Homodimer.

It localises to the cytoplasm. Functionally, participates actively in the response to hyperosmotic and heat shock by preventing the aggregation of stress-denatured proteins, in association with DnaK and GrpE. It is the nucleotide exchange factor for DnaK and may function as a thermosensor. Unfolded proteins bind initially to DnaJ; upon interaction with the DnaJ-bound protein, DnaK hydrolyzes its bound ATP, resulting in the formation of a stable complex. GrpE releases ADP from DnaK; ATP binding to DnaK triggers the release of the substrate protein, thus completing the reaction cycle. Several rounds of ATP-dependent interactions between DnaJ, DnaK and GrpE are required for fully efficient folding. The polypeptide is Protein GrpE 1 (Buchnera aphidicola subsp. Schizaphis graminum (strain Sg)).